A 331-amino-acid polypeptide reads, in one-letter code: Large ribosomal subunit protein uL3 (331 aa).

It belongs to the universal ribosomal protein uL3 family. Part of the 50S ribosomal subunit. Forms a cluster with proteins L14 and L24e.

In terms of biological role, one of the primary rRNA binding proteins, it binds directly near the 3'-end of the 23S rRNA, where it nucleates assembly of the 50S subunit. In Thermoplasma acidophilum (strain ATCC 25905 / DSM 1728 / JCM 9062 / NBRC 15155 / AMRC-C165), this protein is Large ribosomal subunit protein uL3.